Consider the following 332-residue polypeptide: Ferredoxin--NADP reductase 1 (332 aa).

FAD is bound by residues D35, K43, F48, V88, F123, D284, and T325.

The protein belongs to the ferredoxin--NADP reductase type 2 family. As to quaternary structure, homodimer. FAD serves as cofactor.

The catalysed reaction is 2 reduced [2Fe-2S]-[ferredoxin] + NADP(+) + H(+) = 2 oxidized [2Fe-2S]-[ferredoxin] + NADPH. The chain is Ferredoxin--NADP reductase 1 from Listeria welshimeri serovar 6b (strain ATCC 35897 / DSM 20650 / CCUG 15529 / CIP 8149 / NCTC 11857 / SLCC 5334 / V8).